Consider the following 521-residue polypeptide: Bacillolysin (521 aa).

The signal sequence occupies residues 1–27; sequence MGLGKKLSVAVAASFMSLTISLPGVQA. The propeptide at 28-221 is activation peptide; sequence AENPQLKENL…ILKKQNKVEH (194 aa). Residues Gln-283 and Asp-360 each contribute to the Ca(2+) site. Position 364 (His-364) interacts with Zn(2+). The active site involves Glu-365. Residues His-368 and Glu-388 each contribute to the Zn(2+) site. Ca(2+) is bound by residues Asp-399, Asp-402, Asp-404, Glu-407, and Val-411. His-449 serves as the catalytic Proton donor.

This sequence belongs to the peptidase M4 family. It depends on Ca(2+) as a cofactor. The cofactor is Zn(2+).

The protein localises to the secreted. It carries out the reaction Similar, but not identical, to that of thermolysin.. In terms of biological role, extracellular zinc metalloprotease. In Bacillus amyloliquefaciens (Bacillus velezensis), this protein is Bacillolysin (npr).